Here is a 505-residue protein sequence, read N- to C-terminus: ATP synthase subunit alpha, chloroplastic (505 aa).

170–177 contributes to the ATP binding site; that stretch reads GDRQTGKT.

The protein belongs to the ATPase alpha/beta chains family. In terms of assembly, F-type ATPases have 2 components, CF(1) - the catalytic core - and CF(0) - the membrane proton channel. CF(1) has five subunits: alpha(3), beta(3), gamma(1), delta(1), epsilon(1). CF(0) has four main subunits: a, b, b' and c.

The protein resides in the plastid. Its subcellular location is the chloroplast thylakoid membrane. It catalyses the reaction ATP + H2O + 4 H(+)(in) = ADP + phosphate + 5 H(+)(out). Functionally, produces ATP from ADP in the presence of a proton gradient across the membrane. The alpha chain is a regulatory subunit. This is ATP synthase subunit alpha, chloroplastic from Zygnema circumcarinatum (Green alga).